Here is a 110-residue protein sequence, read N- to C-terminus: Large ribosomal subunit protein uL22 (110 aa).

Belongs to the universal ribosomal protein uL22 family. In terms of assembly, part of the 50S ribosomal subunit.

In terms of biological role, this protein binds specifically to 23S rRNA; its binding is stimulated by other ribosomal proteins, e.g. L4, L17, and L20. It is important during the early stages of 50S assembly. It makes multiple contacts with different domains of the 23S rRNA in the assembled 50S subunit and ribosome. Functionally, the globular domain of the protein is located near the polypeptide exit tunnel on the outside of the subunit, while an extended beta-hairpin is found that lines the wall of the exit tunnel in the center of the 70S ribosome. In Shewanella denitrificans (strain OS217 / ATCC BAA-1090 / DSM 15013), this protein is Large ribosomal subunit protein uL22.